We begin with the raw amino-acid sequence, 370 residues long: Luciferin sulfotransferase (370 aa).

90-95 (KAGTTW) provides a ligand contact to 3'-phosphoadenylyl sulfate. The active-site Proton acceptor is His165. 3'-phosphoadenylyl sulfate is bound by residues Arg189, Ser197, Tyr250, 284–289 (LSFESM), and 316–320 (FMRSG).

Belongs to the sulfotransferase 1 family.

It catalyses the reaction firefly D-luciferin + 3'-phosphoadenylyl sulfate = firefly D-sulfoluciferin + adenosine 3',5'-bisphosphate + H(+). The enzyme catalyses firefly L-luciferin + 3'-phosphoadenylyl sulfate = firefly L-sulfoluciferin + adenosine 3',5'-bisphosphate + H(+). Its activity is regulated as follows. Sulfoluciferin formation is inhibited by the product adenosine 3',5'-bisphosphate. Functionally, catalyzes the production of firefly sulfoluciferin from luciferin using the sulfo-donor 3'-phosphoadenylyl sulfate (PAPS). Is also able to catalyze the reverse reaction, i.e. the adenosine 3',5'-bisphosphate-dependent desulfonation of sulfoluciferin. Can use either D- or L-luciferin stereoisomer as substrate. Sulfoluciferin, which is not a substrate of P.pyralis luciferase, likely serves as a luciferin storage form in fireflies. This Photinus pyralis (Common eastern firefly) protein is Luciferin sulfotransferase.